Reading from the N-terminus, the 921-residue chain is Isoleucine--tRNA ligase (921 aa).

The 'HIGH' region signature appears at 57 to 67 (PYANGDIHMGH). Glutamate 553 is an L-isoleucyl-5'-AMP binding site. Residues 594–598 (KMSKS) carry the 'KMSKS' region motif. An ATP-binding site is contributed by lysine 597.

The protein belongs to the class-I aminoacyl-tRNA synthetase family. IleS type 1 subfamily. As to quaternary structure, monomer.

It is found in the cytoplasm. It catalyses the reaction tRNA(Ile) + L-isoleucine + ATP = L-isoleucyl-tRNA(Ile) + AMP + diphosphate. Catalyzes the attachment of isoleucine to tRNA(Ile). As IleRS can inadvertently accommodate and process structurally similar amino acids such as valine, to avoid such errors it has two additional distinct tRNA(Ile)-dependent editing activities. One activity is designated as 'pretransfer' editing and involves the hydrolysis of activated Val-AMP. The other activity is designated 'posttransfer' editing and involves deacylation of mischarged Val-tRNA(Ile). The sequence is that of Isoleucine--tRNA ligase from Bacillus subtilis (strain 168).